Reading from the N-terminus, the 191-residue chain is Adenine phosphoribosyltransferase 5 (191 aa).

This sequence belongs to the purine/pyrimidine phosphoribosyltransferase family. In terms of assembly, homodimer.

Its subcellular location is the cytoplasm. It catalyses the reaction AMP + diphosphate = 5-phospho-alpha-D-ribose 1-diphosphate + adenine. It participates in purine metabolism; AMP biosynthesis via salvage pathway; AMP from adenine: step 1/1. In terms of biological role, catalyzes a salvage reaction resulting in the formation of AMP, that is energically less costly than de novo synthesis. May contribute to the recycling of adenine into adenylate nucleotides and the inactivation of cytokinins by phosphoribosylation. Possesses low activity toward adenine, but can efficiently convert cytokinins from free bases (active form) to the corresponding nucleotides (inactive form). The chain is Adenine phosphoribosyltransferase 5 (APT5) from Arabidopsis thaliana (Mouse-ear cress).